The primary structure comprises 569 residues: Cytosolic purine 5'-nucleotidase (569 aa).

Residue Asp52 is the Nucleophile of the active site. 2 residues coordinate IMP: Asp52 and Asp54. 2 residues coordinate Mg(2+): Asp52 and Asp54. The active-site Proton donor is Asp54. Residues Arg144 and Asn154 each coordinate ATP. Residues Arg202, Asp206, Lys215, Thr249, Asn250, Ser251, and Lys292 each contribute to the IMP site. Asp351 lines the Mg(2+) pocket. ATP is bound by residues Gln453 and Arg456. Positions 527-569 (SISEIKPPNLFPQAPQEITHCHDEDDDEEEEEEEVEEEEEEEE) are disordered. The interval 548-569 (HDEDDDEEEEEEEVEEEEEEEE) is required for tetramer assembly. Residues 550–569 (EDDDEEEEEEEVEEEEEEEE) are compositionally biased toward acidic residues.

It belongs to the 5'(3')-deoxyribonucleotidase family. Homotetramer. Mg(2+) is required as a cofactor.

Its subcellular location is the cytoplasm. The protein localises to the cytosol. The enzyme catalyses a ribonucleoside 5'-phosphate + H2O = a ribonucleoside + phosphate. It catalyses the reaction a 2'-deoxyribonucleoside + a ribonucleoside 5'-phosphate = a ribonucleoside + a 2'-deoxyribonucleoside 5'-phosphate. It carries out the reaction IMP + H2O = inosine + phosphate. The catalysed reaction is GMP + H2O = guanosine + phosphate. The enzyme catalyses dGMP + H2O = 2'-deoxyguanosine + phosphate. It catalyses the reaction dIMP + H2O = 2'-deoxyinosine + phosphate. It carries out the reaction XMP + H2O = xanthosine + phosphate. The catalysed reaction is inosine + GMP = guanosine + IMP. The enzyme catalyses dGMP + inosine = 2'-deoxyguanosine + IMP. It catalyses the reaction dIMP + inosine = 2'-deoxyinosine + IMP. It carries out the reaction inosine + UMP = uridine + IMP. The catalysed reaction is inosine + CMP = cytidine + IMP. The enzyme catalyses inosine + AMP = IMP + adenosine. Allosterically activated by various compounds including ATP, 2,3-BPG/2,3-Bisphosphoglyceric acid and Ap4A/P1,P4-bis(5'-adenosyl) tetraphosphate. Binding of an allosteric activator is a prerequisiste to magnesium and substrate binding. Inhibited by inorganic phosphate. Inhibited by inosine, guanosine, p-chloromercuribenzoate and NaF. Functionally, broad specificity cytosolic 5'-nucleotidase that catalyzes the dephosphorylation of 6-hydroxypurine nucleoside 5'-monophosphates. In addition, possesses a phosphotransferase activity by which it can transfer a phosphate from a donor nucleoside monophosphate to an acceptor nucleoside, preferably inosine, deoxyinosine and guanosine. Has the highest activities for IMP and GMP followed by dIMP, dGMP and XMP. Could also catalyze the transfer of phosphates from pyrimidine monophosphates but with lower efficiency. Through these activities regulates the purine nucleoside/nucleotide pools within the cell. The sequence is that of Cytosolic purine 5'-nucleotidase (NT5C2) from Gallus gallus (Chicken).